A 323-amino-acid polypeptide reads, in one-letter code: Aspartate carbamoyltransferase catalytic subunit (323 aa).

Carbamoyl phosphate is bound by residues Arg-71 and Thr-72. Lys-99 contacts L-aspartate. Residues Arg-121, His-151, and Gln-154 each contribute to the carbamoyl phosphate site. L-aspartate is bound by residues Arg-184 and Arg-239. Positions 280 and 281 each coordinate carbamoyl phosphate.

The protein belongs to the aspartate/ornithine carbamoyltransferase superfamily. ATCase family. Heterododecamer (2C3:3R2) of six catalytic PyrB chains organized as two trimers (C3), and six regulatory PyrI chains organized as three dimers (R2).

The enzyme catalyses carbamoyl phosphate + L-aspartate = N-carbamoyl-L-aspartate + phosphate + H(+). Its pathway is pyrimidine metabolism; UMP biosynthesis via de novo pathway; (S)-dihydroorotate from bicarbonate: step 2/3. Catalyzes the condensation of carbamoyl phosphate and aspartate to form carbamoyl aspartate and inorganic phosphate, the committed step in the de novo pyrimidine nucleotide biosynthesis pathway. This is Aspartate carbamoyltransferase catalytic subunit from Ralstonia nicotianae (strain ATCC BAA-1114 / GMI1000) (Ralstonia solanacearum).